A 493-amino-acid chain; its full sequence is 3-octaprenyl-4-hydroxybenzoate carboxy-lyase (493 aa).

Residue asparagine 172 participates in Mn(2+) binding. Prenylated FMN is bound by residues isoleucine 175 to arginine 177, arginine 189 to leucine 191, and arginine 194 to glycine 195. Glutamate 238 contacts Mn(2+). The active-site Proton donor is aspartate 287.

This sequence belongs to the UbiD family. Homohexamer. Prenylated FMN is required as a cofactor. The cofactor is Mn(2+).

It localises to the cell membrane. It catalyses the reaction a 4-hydroxy-3-(all-trans-polyprenyl)benzoate + H(+) = a 2-(all-trans-polyprenyl)phenol + CO2. Its pathway is cofactor biosynthesis; ubiquinone biosynthesis. Catalyzes the decarboxylation of 3-octaprenyl-4-hydroxy benzoate to 2-octaprenylphenol, an intermediate step in ubiquinone biosynthesis. In Shewanella baltica (strain OS155 / ATCC BAA-1091), this protein is 3-octaprenyl-4-hydroxybenzoate carboxy-lyase.